The sequence spans 280 residues: Large ribosomal subunit protein uL2 (280 aa).

Disordered regions lie at residues 1–59 (MAIR…GGHK) and 223–280 (GVVM…NKKR). Composition is skewed to basic residues over residues 45–59 (VHGHITTRHKGGGHK) and 269–280 (VRRRRSNKNKKR).

Belongs to the universal ribosomal protein uL2 family. In terms of assembly, part of the 50S ribosomal subunit. Forms a bridge to the 30S subunit in the 70S ribosome.

Its function is as follows. One of the primary rRNA binding proteins. Required for association of the 30S and 50S subunits to form the 70S ribosome, for tRNA binding and peptide bond formation. It has been suggested to have peptidyltransferase activity; this is somewhat controversial. Makes several contacts with the 16S rRNA in the 70S ribosome. This Corynebacterium jeikeium (strain K411) protein is Large ribosomal subunit protein uL2.